The sequence spans 2566 residues: MTPEPIAIIGTGCKFPGSASSPSRLWDLLRNPKTVASEPPSTRFDNRSFYDPDPSHPGTTNTKESYFLSEDIRLFDSAFFNISASEAEGIDPQQRLLLETVYESLEIAGQRLEALQGSSTGIFCGVMGNDWEHRVGFDDKAIPRYAATGLARNNIANRVSYFFDWHGPSLVVDTACSSSLVALHQAVTALRQGECSVAVAAGTNLLLHPNIYISTSNLQMLSPNGRGRMWDAKADGYARGEGIGALVLKCLSDAIADGDPIECVIRATGVNQDGRTMGLTMPSSKAQLALIESTYAQAGLDPKTRPEDRCQYFEAHGTGTLAGDPQEASAIYKSFFGDSSQHVSDNDPLYVGSIKTVVGHTEGTAGIAGVIKASLSIQHGTIFPNLLFDELNPELQRFTPRLKVPTETMPWPTLAPNIPRRVSVNSFGFGGTNAHAILESYDIECDENWNGIPPQISNPIVLPFLFSAASARSLGTMLSNYEEYLRSNPKIHLMDLAWTLMKRRSMLAYRVVLCAPTIEVLIIKIREELELRKINNPSTITAQPPSGQKRILGIFTGQGAQWPQMGLDLVTHTSEGRQLFEEMHQSLLSLPIELQPTFSLFDELAAAQPMSRLHEAVLSQPLCAALQIILVNFLTAVGISFETVVGHSSGEIAAAYSAGILSASDCIRVAYLRGRVAGLAGAPNGQPGAMLAVGLSFATANLLCLEPGLQGRVHVAASNSPSSVTLSGDQDAIHEVEQRLQVEGKFARMLRVDTAYHSHHMQPCAKPYLLDMDAAQVKLGLQMNTRWYSSVHDAQEINLDEHGQSLTGEYWKNNMVSPVLFSAALLAALTSDGGPPDVIVEIGPHPALKGPAQQTISDALPSAGGSEIPYIGLSNRGASGIESLANAIGLLCAHLGPNSIDLARYFSLFDHKYTPKVVRGLPAYPFDHRQRHWFETRKLKNHLHNGGLLHPLLGSLEADTADGEWRWRHYLRREELEWLDGHQIQSRTVFPATGYIAMALEAAGIFAAGQSMRLVQIQRLSIDQAITFSDESSTGIETLFRLSGLQSQGDQVTGTFNCHANIGGRLVNCASGKLLICWGNPETSMLPSQTPPAADAGAVDIKDFYQSLAKLGYNYTGAFQGITSLARQKDMSTGQIINMGQLSHESSLLFHPVMMDTSLQMLLGALGAPGDGSLYTLMVPTGIERVTINPAFCGPKGAKAAGRTLFADAFITQLDTDGCSGAVEVFTQEGNGMVQMEGVHISPLGPPDRQRQPFSEIAWGPLTPDAGLHSYPYPADLMNHTLLMEQISLINIKQVVDQLTDKDRSGLDWHRSRVVAWMEHVLAMTRTGKHPTCRSEWLDGTQEDIEVLLERLAPSVTGLLAGVVGANMLRFLRGETSMLEEARKDDVLSRFYKEDPESKTMNDRLGDLVGQIAFRYPRMKILEIGAGSGSATKSILERIGSSYHSYTFTDISPGFFEEAKQQFAEHQDHFIYQVLNVEKDPSKQGFEDDSYDLVIAANVLHATKSMKDTMTNVRRLLKPGGYLGLMEVTNTSTIGISFCVGGFEGWWAGEGDGRVWGPMLNASNWENVLQDTGFGGIDTITTLGDARLSAYSVLVSQAVDDRMKVLRQPLSPAHQLKDTAGELVIVGGEKDQTVSLVEEVAHLLEPFFARIVPVQTLELLKGVNISPYATVLSLVDMDGPCFEYLSQSRLQGLQALTVAARKMLWVTTGRECDSPHLGMSKGWLKCLSYEHPEAQYQYLNITDDSTEESTLIAATLMRLVRTDEGNDYSLSSRTSATEPELRFQNGTMSIPRLRASPELNDRYVAGQQLVHKPVNLLESTVRMLPSAKGHYALHLEDKSLVSSHRADIDTELVRIRTRYSTIQAVRVGKDDVFLHLVLGEQEHSHRRLLAYSKDHASIITTPMSWCCDLPDAVRPEFENSFLQATLAAVLARVLVQQATPGSVLWAHEASGVLQQAIRIHAVASGVRPHFTTSSQSLPMEGVSFIHPLVTSRKLVGYLPQDVSVAACFEVEEQGDEGIFSRIKSLLPQCVTVEDTHSLWRTSQQLPEHGNVHHRHLGESLNVASAMAIQFVTSDPTQPVDVKGLSALPPTPRTPKADCIVKWTGSQNEALNVQVKTASQTLTLSSQKTYLLVGMTGDLGRSICHWLITKGARHVVLTSRSPKVDPHWIQEMSKLGANVVPMQLDVSNRESLLHVCDKIQKYHPRIGGVVNGALVLNDCAFDEMPLETMQATFAAKVDGSILLDELFRGDLDFFILMGSLTGIVGNWNQSAYSAATGFQSNLIHQRRARNIVGSIIQPGIITSVGYISRKGSGLAQHVSNTVGSLLLSERDLHEVFAEAILAGHPETSRNPEIVAGMPMANPVTQPDIIWYRNPLCWDFVDYRIQSSSANHAGDGNTCSMKARLESAASMSEAAEIVAAGLADKVRSKFNLASDIALTQDTQLSDLGIDSLVAVDLRSWFVRELSVEIPMLQILSGSSLRALTADSVSKLPPTLLPGILSRDQDFKDVSGLTSPPEVPSDASRSSVSSGMDEIVTPESPSFDQVYRIAGDEMELTKPHQRPIPTPQL.

Residues 3–440 form the Ketosynthase family 3 (KS3) domain; that stretch reads PEPIAIIGTG…GTNAHAILES (438 aa). Positions 35–61 are disordered; that stretch reads VASEPPSTRFDNRSFYDPDPSHPGTTN. Residues 44–54 are compositionally biased toward basic and acidic residues; the sequence is FDNRSFYDPDP. Residues Cys-176, His-316, and His-360 each act as for beta-ketoacyl synthase activity in the active site. The tract at residues 554-880 is malonyl-CoA:ACP transacylase (MAT) domain; it reads IFTGQGAQWP…IGLSNRGASG (327 aa). Residue Ser-648 is the For malonyltransferase activity of the active site. The interval 950–1081 is N-terminal hotdog fold; sequence HPLLGSLEAD…GKLLICWGNP (132 aa). Positions 950–1246 are dehydratase (DH) domain; the sequence is HPLLGSLEAD…EGVHISPLGP (297 aa). One can recognise a PKS/mFAS DH domain in the interval 950 to 1250; it reads HPLLGSLEAD…ISPLGPPDRQ (301 aa). Catalysis depends on His-982, which acts as the Proton acceptor; for dehydratase activity. Residues 1096–1250 are C-terminal hotdog fold; it reads AGAVDIKDFY…ISPLGPPDRQ (155 aa). Asp-1156 functions as the Proton donor; for dehydratase activity in the catalytic mechanism. Residues 1386–1581 are methyltransferase (CMet) domain; it reads DVLSRFYKED…TGFGGIDTIT (196 aa). A ketoreductase (KR) domain region spans residues 2127-2294; sequence KTYLLVGMTG…RRARNIVGSI (168 aa). The 79-residue stretch at 2411-2489 folds into the Carrier domain; sequence EAAEIVAAGL…ALTADSVSKL (79 aa). O-(pantetheine 4'-phosphoryl)serine is present on Ser-2449. The interval 2505-2540 is disordered; sequence KDVSGLTSPPEVPSDASRSSVSSGMDEIVTPESPSF. Residues 2518–2527 show a composition bias toward low complexity; the sequence is SDASRSSVSS.

Pantetheine 4'-phosphate is required as a cofactor.

It functions in the pathway secondary metabolite biosynthesis; terpenoid biosynthesis. Its pathway is mycotoxin biosynthesis. Highly reducing polyketide synthase (HR-PKS); part of the gene cluster that mediates the biosynthesis of the neurotoxin verrucosidin, a methylated alpha-pyrone polyketide that inhibits oxidative phosphorylation in mitochondria and thereby causes neurological diseases. The carbon backbone of verrucosidin is synthesized by the HR-PKS verA, and further modified by the other verrucodidin cluster enzymes. This chain is Highly reducing polyketide synthase verA, found in Penicillium polonicum.